A 163-amino-acid chain; its full sequence is Crossover junction endodeoxyribonuclease RuvC (163 aa).

Active-site residues include Asp-7, Glu-67, and Asp-140. Mg(2+) contacts are provided by Asp-7, Glu-67, and Asp-140.

Belongs to the RuvC family. Homodimer which binds Holliday junction (HJ) DNA. The HJ becomes 2-fold symmetrical on binding to RuvC with unstacked arms; it has a different conformation from HJ DNA in complex with RuvA. In the full resolvosome a probable DNA-RuvA(4)-RuvB(12)-RuvC(2) complex forms which resolves the HJ. The cofactor is Mg(2+).

The protein resides in the cytoplasm. It carries out the reaction Endonucleolytic cleavage at a junction such as a reciprocal single-stranded crossover between two homologous DNA duplexes (Holliday junction).. Functionally, the RuvA-RuvB-RuvC complex processes Holliday junction (HJ) DNA during genetic recombination and DNA repair. Endonuclease that resolves HJ intermediates. Cleaves cruciform DNA by making single-stranded nicks across the HJ at symmetrical positions within the homologous arms, yielding a 5'-phosphate and a 3'-hydroxyl group; requires a central core of homology in the junction. The consensus cleavage sequence is 5'-(A/T)TT(C/G)-3'. Cleavage occurs on the 3'-side of the TT dinucleotide at the point of strand exchange. HJ branch migration catalyzed by RuvA-RuvB allows RuvC to scan DNA until it finds its consensus sequence, where it cleaves and resolves the cruciform DNA. The polypeptide is Crossover junction endodeoxyribonuclease RuvC (Desulforamulus reducens (strain ATCC BAA-1160 / DSM 100696 / MI-1) (Desulfotomaculum reducens)).